A 763-amino-acid chain; its full sequence is Actin filament-associated protein 1-like 1 (763 aa).

Residues 83-137 are disordered; sequence LQDMPEDEAESCKAASPEPAKSPSLRHTADLPPPLPNRPPPEDYYEEALPLGPGK. Phosphoserine is present on residues S98, S104, and S153. Positions 169–210 are disordered; it reads TRMNGELKNSYNDSDAMSSSYESYDEEEEEGKGPQPTHQWPS. Positions 175–185 are enriched in polar residues; it reads LKNSYNDSDAM. The 97-residue stretch at 220-316 folds into the PH 1 domain; it reads DCRICAFLLR…WLKVIREVSK (97 aa). A phosphoserine mark is found at S329 and S343. Residues 343–380 form a disordered region; it reads SQEKQTSDSDSLGMGDSCSTLGREHGKGKKSSLSELKG. The region spanning 413-507 is the PH 2 domain; the sequence is EVPCCGYLNV…WLGLLLVEMG (95 aa). At Y552 the chain carries Phosphotyrosine. The disordered stretch occupies residues 561-604; sequence QDEEPERPPGAQVKRHASTCSEKSHRVDPQVKVKRHASSAHQYK. Over residues 582 to 591 the composition is skewed to basic and acidic residues; it reads EKSHRVDPQV. Residues 606–694 are a coiled coil; sequence GKNRAEEDAR…LVTVKERLQQ (89 aa). Over residues 712–724 the composition is skewed to polar residues; it reads SGETANKPQNNVP. Positions 712–763 are disordered; sequence SGETANKPQNNVPEQPLPVNCVSELRKRSPSIINSNQGRVLQKAKEWEMKKT. S742 bears the Phosphoserine mark. Basic and acidic residues predominate over residues 754–763; that stretch reads KAKEWEMKKT.

As to quaternary structure, interacts with CTTN.

Its subcellular location is the cytoplasm. The protein localises to the cell projection. It is found in the podosome. The protein resides in the invadopodium. It localises to the cytoskeleton. Its subcellular location is the stress fiber. In terms of biological role, may be involved in podosome and invadosome formation. This chain is Actin filament-associated protein 1-like 1 (AFAP1L1), found in Bos taurus (Bovine).